A 113-amino-acid chain; its full sequence is Protein crumbs homolog 3 (113 aa).

A signal peptide spans 1–24 (MATPGLGVLLAFGLPMLPSGWSLT). The interval 23–44 (LTAPDPFTNSTTQPPGDESNGG) is disordered. Residues 25-49 (APDPFTNSTTQPPGDESNGGLSSGA) are Extracellular-facing. N31 carries N-linked (GlcNAc...) asparagine glycosylation. Residues 50–70 (IVAITVVFSILGVLLIAVGLF) traverse the membrane as a helical segment. Residues 71-113 (LLMRKLREKRQTEGTYRPSSEEQVGARAPPPPNLKLPPEERLI) lie on the Cytoplasmic side of the membrane. Residues 77–113 (REKRQTEGTYRPSSEEQVGARAPPPPNLKLPPEERLI) form an interaction with EPB41L5 region. The interval 80–113 (RQTEGTYRPSSEEQVGARAPPPPNLKLPPEERLI) is disordered. Residues 83-92 (EGTYRPSSEE) are compositionally biased toward polar residues. The PDZ-binding motif lies at 110–113 (ERLI).

Component of a complex composed of CRB3, PALS1 and PATJ. Interacts (via C-terminus) with PALS1 (via PDZ domain). Interacts with PARD6A. Interacts (via intracellular domain) with EPB41L5. Interacts with WDR83. As to expression, expressed in the apical renal tubules (at protein level). Expressed in the retinal pigment epithelium.

It is found in the apical cell membrane. Its subcellular location is the cell junction. The protein resides in the tight junction. Involved in the establishment of cell polarity in mammalian epithelial cells. Regulates the morphogenesis of tight junctions. Involved in promoting phosphorylation and cytoplasmic retention of transcriptional coactivators YAP1 and WWTR1/TAZ which leads to suppression of TGFB1-dependent transcription of target genes such as CCN2/CTGF, SERPINE1/PAI1, SNAI1/SNAIL1 and SMAD7. This chain is Protein crumbs homolog 3 (Crb3), found in Mus musculus (Mouse).